The chain runs to 127 residues: MTWAPTGPTNVELRKLIRDLKKAACEYNAPVWRDVAERLSRPRRQRAEVNVGKLDGLARRGVIQEEETVLVPGKVLGDGVITQPLRVAAWRFSRTARMKIEAAGGECLTIRELLEENPEGSYIRIIE.

It belongs to the eukaryotic ribosomal protein eL18 family.

In Methanopyrus kandleri (strain AV19 / DSM 6324 / JCM 9639 / NBRC 100938), this protein is Large ribosomal subunit protein eL18.